Consider the following 597-residue polypeptide: Centrosomal protein of 70 kDa (597 aa).

The interval 1 to 24 is disordered; sequence MFPVAPKPQDSNQPSDRLMTEKQQ. Coiled-coil stretches lie at residues 66–179 and 254–320; these read MRQN…QTEV and TYKG…QELI. The TPR repeat unit spans residues 483–516; that stretch reads NGVYPRMNEVYTRLGEMNNAVRNLQELLELDSSS.

Directly interacts with tubulin-gamma; this interaction determines centrosomal localization.

The protein resides in the cytoplasm. It is found in the cytoskeleton. It localises to the microtubule organizing center. Its subcellular location is the centrosome. Plays a role in the organization of both preexisting and nascent microtubules in interphase cells. During mitosis, required for the organization and orientation of the mitotic spindle. This is Centrosomal protein of 70 kDa (CEP70) from Macaca fascicularis (Crab-eating macaque).